Reading from the N-terminus, the 121-residue chain is Small ribosomal subunit protein uS13 (121 aa).

The tract at residues 91-121 (HRRGLPVRGQNTKNNARTRKGPSKTVAGKKK) is disordered. The segment covering 106-121 (ARTRKGPSKTVAGKKK) has biased composition (basic residues).

The protein belongs to the universal ribosomal protein uS13 family. In terms of assembly, part of the 30S ribosomal subunit. Forms a loose heterodimer with protein S19. Forms two bridges to the 50S subunit in the 70S ribosome.

Its function is as follows. Located at the top of the head of the 30S subunit, it contacts several helices of the 16S rRNA. In the 70S ribosome it contacts the 23S rRNA (bridge B1a) and protein L5 of the 50S subunit (bridge B1b), connecting the 2 subunits; these bridges are implicated in subunit movement. Contacts the tRNAs in the A and P-sites. In Listeria monocytogenes serotype 4b (strain CLIP80459), this protein is Small ribosomal subunit protein uS13.